A 198-amino-acid polypeptide reads, in one-letter code: Large ribosomal subunit protein uL23c (198 aa).

A chloroplast-targeting transit peptide spans 1–76; it reads MATTAPNLHS…SFGRDLMVAQ (76 aa).

This sequence belongs to the universal ribosomal protein uL23 family. Component of the chloroplast large ribosomal subunit (LSU). Mature 70S chloroplast ribosomes of higher plants consist of a small (30S) and a large (50S) subunit. The 30S small subunit contains 1 molecule of ribosomal RNA (16S rRNA) and 24 different proteins. The 50S large subunit contains 3 rRNA molecules (23S, 5S and 4.5S rRNA) and 33 different proteins.

It is found in the plastid. The protein localises to the chloroplast. Component of the chloroplast ribosome (chloro-ribosome), a dedicated translation machinery responsible for the synthesis of chloroplast genome-encoded proteins, including proteins of the transcription and translation machinery and components of the photosynthetic apparatus. In Spinacia oleracea (Spinach), this protein is Large ribosomal subunit protein uL23c (RPL23).